A 440-amino-acid chain; its full sequence is Xylose isomerase (440 aa).

Positions 307 and 309 each coordinate Mg(2+).

The protein belongs to the xylose isomerase family. In terms of assembly, homotetramer. Requires Mg(2+) as cofactor.

The protein resides in the cytoplasm. It carries out the reaction alpha-D-xylose = alpha-D-xylulofuranose. This Pectobacterium carotovorum subsp. carotovorum (strain PC1) protein is Xylose isomerase.